The chain runs to 72 residues: SRY-related protein MG43 (72 aa).

Positions 1 to 69 (VKRPMNAFMV…KHMADYPDYK (69 aa)) form a DNA-binding region, HMG box.

The protein resides in the nucleus. The polypeptide is SRY-related protein MG43 (Tarentola mauritanica (Common wall gecko)).